The primary structure comprises 483 residues: Regulatory protein ViaA (483 aa).

Belongs to the ViaA family. As to quaternary structure, homodimer. Interacts with RavA.

The protein localises to the cytoplasm. Its function is as follows. Component of the RavA-ViaA chaperone complex, which may act on the membrane to optimize the function of some of the respiratory chains. ViaA stimulates the ATPase activity of RavA. This is Regulatory protein ViaA from Enterobacter sp. (strain 638).